We begin with the raw amino-acid sequence, 510 residues long: Alpha-L-arabinofuranosidase B (510 aa).

The N-terminal stretch at 1–24 (MTMSRSSRSSVLALALATGSLVAA) is a signal peptide. The tract at residues 25–342 (GPCDIYSSGG…ADIVAAKYAT (318 aa)) is catalytic. Disulfide bonds link cysteine 27/cysteine 37, cysteine 87/cysteine 92, and cysteine 182/cysteine 183. N-linked (GlcNAc...) asparagine glycosylation is present at asparagine 89. Aspartate 225 contacts substrate. The Nucleophile role is filled by glutamate 227. Positions 228 and 303 each coordinate substrate. The Proton donor role is filled by aspartate 304. Residues 343 to 510 (TSLISGPALT…VSWVVADGFA (168 aa)) form an ABD region. Residues cysteine 412 and cysteine 450 are joined by a disulfide bond. 8 residues coordinate substrate: histidine 427, asparagine 429, phenylalanine 430, aspartate 446, histidine 475, glutamate 477, leucine 480, and aspartate 500.

It belongs to the glycosyl hydrolase 54 family.

Its subcellular location is the secreted. The catalysed reaction is Hydrolysis of terminal non-reducing alpha-L-arabinofuranoside residues in alpha-L-arabinosides.. It functions in the pathway glycan metabolism; L-arabinan degradation. Functionally, alpha-L-arabinofuranosidase involved in the degradation of arabinoxylan, a major component of plant hemicellulose. Able to hydrolyze 1,5-, 1,3- and 1,2-alpha-linkages not only in L-arabinofuranosyl oligosaccharides, but also in polysaccharides containing terminal non-reducing L-arabinofuranoses in side chains, like L-arabinan, arabinogalactan and arabinoxylan. This is Alpha-L-arabinofuranosidase B (abfB) from Emericella nidulans (strain FGSC A4 / ATCC 38163 / CBS 112.46 / NRRL 194 / M139) (Aspergillus nidulans).